Consider the following 309-residue polypeptide: Glutaminase (309 aa).

Positions 65, 117, 162, 169, 193, 245, and 263 each coordinate substrate.

It belongs to the glutaminase family. In terms of assembly, homotetramer.

It carries out the reaction L-glutamine + H2O = L-glutamate + NH4(+). This is Glutaminase from Shouchella clausii (strain KSM-K16) (Alkalihalobacillus clausii).